An 809-amino-acid chain; its full sequence is Ubiquitin carboxyl-terminal hydrolase 1 (809 aa).

The USP domain maps to 101-738 (AGLVNDGNTC…GVFMLFYEYD (638 aa)). Cys-110 (nucleophile) is an active-site residue. The tract at residues 143–195 (NEHNEEGNGQESAQDEATHKKNTRKGGKVYGKHKKKLNRKSSSKEDEEKSQEP) is disordered. Residues 162-183 (KKNTRKGGKVYGKHKKKLNRKS) are compositionally biased toward basic residues. Basic and acidic residues predominate over residues 184 to 194 (SSKEDEEKSQE). Ser-530, Ser-531, and Ser-555 each carry phosphoserine. The disordered stretch occupies residues 569–596 (ASHYNHTKDISNYDPLNGEVDGVTSDDE). Residues Ser-618 and Ser-638 each carry the phosphoserine modification. Thr-652 is subject to Phosphothreonine. 3 positions are modified to phosphoserine: Ser-653, Ser-654, and Ser-670. Residue His-697 is the Proton acceptor of the active site. A disordered region spans residues 750-809 (LEAIQSNNEEDDEKEQEQKGVQEPKESQEQGEGEEQEEGQEQMKFERTEDHRDISGKDVN). Ser-755 is subject to Phosphoserine. Residues 765–777 (QEQKGVQEPKESQ) show a composition bias toward basic and acidic residues. Residues 778 to 789 (EQGEGEEQEEGQ) are compositionally biased toward acidic residues. The span at 790-809 (EQMKFERTEDHRDISGKDVN) shows a compositional bias: basic and acidic residues.

The protein belongs to the peptidase C19 family.

The enzyme catalyses Thiol-dependent hydrolysis of ester, thioester, amide, peptide and isopeptide bonds formed by the C-terminal Gly of ubiquitin (a 76-residue protein attached to proteins as an intracellular targeting signal).. Functionally, has an ATP-independent isopeptidase activity, cleaving at the C-terminus of the ubiquitin moiety in natural or engineered linear fusion proteins, irrespective of their size or the presence of an N-terminal extension to ubiquitin. This Saccharomyces cerevisiae (strain ATCC 204508 / S288c) (Baker's yeast) protein is Ubiquitin carboxyl-terminal hydrolase 1 (UBP1).